The chain runs to 216 residues: uncharacterized protein (216 aa).

The N-acetyltransferase domain occupies 1-216 (MVVKIVEAYE…DVTFLKLKLK (216 aa)).

The protein belongs to the acetyltransferase family.

This is an uncharacterized protein from Dictyostelium discoideum (Social amoeba).